The chain runs to 356 residues: Alanine racemase, catabolic (356 aa).

Lysine 35 functions as the Proton acceptor; specific for D-alanine in the catalytic mechanism. At lysine 35 the chain carries N6-(pyridoxal phosphate)lysine. Arginine 130 contacts substrate. Tyrosine 253 (proton acceptor; specific for L-alanine) is an active-site residue. Methionine 301 provides a ligand contact to substrate.

Belongs to the alanine racemase family. Requires pyridoxal 5'-phosphate as cofactor.

It carries out the reaction L-alanine = D-alanine. In terms of biological role, isomerizes L-alanine to D-alanine which is then oxidized to pyruvate by DadA. The polypeptide is Alanine racemase, catabolic (dadX) (Escherichia coli O6:H1 (strain CFT073 / ATCC 700928 / UPEC)).